Consider the following 296-residue polypeptide: 4-hydroxy-tetrahydrodipicolinate synthase (296 aa).

T49 is a binding site for pyruvate. The active-site Proton donor/acceptor is the Y137. Catalysis depends on K165, which acts as the Schiff-base intermediate with substrate. I207 contacts pyruvate.

Belongs to the DapA family. As to quaternary structure, homotetramer; dimer of dimers.

The protein localises to the cytoplasm. The catalysed reaction is L-aspartate 4-semialdehyde + pyruvate = (2S,4S)-4-hydroxy-2,3,4,5-tetrahydrodipicolinate + H2O + H(+). It functions in the pathway amino-acid biosynthesis; L-lysine biosynthesis via DAP pathway; (S)-tetrahydrodipicolinate from L-aspartate: step 3/4. Its function is as follows. Catalyzes the condensation of (S)-aspartate-beta-semialdehyde [(S)-ASA] and pyruvate to 4-hydroxy-tetrahydrodipicolinate (HTPA). The polypeptide is 4-hydroxy-tetrahydrodipicolinate synthase (Rhodopseudomonas palustris (strain BisA53)).